Consider the following 323-residue polypeptide: tRNA dimethylallyltransferase (323 aa).

Residue 15-22 participates in ATP binding; that stretch reads GATGSGKT. 17 to 22 contributes to the substrate binding site; sequence TGSGKT. Interaction with substrate tRNA stretches follow at residues 40–43 and 164–168; these read DSRQ and QRLIR.

This sequence belongs to the IPP transferase family. Monomer. Mg(2+) is required as a cofactor.

The catalysed reaction is adenosine(37) in tRNA + dimethylallyl diphosphate = N(6)-dimethylallyladenosine(37) in tRNA + diphosphate. In terms of biological role, catalyzes the transfer of a dimethylallyl group onto the adenine at position 37 in tRNAs that read codons beginning with uridine, leading to the formation of N6-(dimethylallyl)adenosine (i(6)A). The sequence is that of tRNA dimethylallyltransferase from Chloroherpeton thalassium (strain ATCC 35110 / GB-78).